A 275-amino-acid polypeptide reads, in one-letter code: Large ribosomal subunit protein uL2c (275 aa).

The interval 224 to 275 (AMNPVDHPHGGGEGRTPIGRKKPVTPWGYSALGKKSRKRNRYSDASILRRRE) is disordered.

This sequence belongs to the universal ribosomal protein uL2 family. As to quaternary structure, part of the 50S ribosomal subunit.

It localises to the plastid. Its subcellular location is the chloroplast. The protein is Large ribosomal subunit protein uL2c (rpl2) of Picea abies (Norway spruce).